Reading from the N-terminus, the 388-residue chain is Staphopain A (388 aa).

Positions 1–25 (MKRNFPKLIALSLIFSLSVTPIANA) are cleaved as a signal peptide. A propeptide spanning residues 26 to 214 (ESNSNIKAKD…TSQFKSNNYT (189 aa)) is cleaved from the precursor. Residues cysteine 238, histidine 334, and asparagine 355 contribute to the active site.

Belongs to the peptidase C47 family. In the cytoplasm, prematurely activated/folded ScpA forms a stable non-covalent complex with ScpB. Cleavage leads to the activation of ScpA probably by an auto-catalytic manner.

The protein resides in the secreted. It catalyses the reaction Broad endopeptidase action on proteins including elastin, but rather limited hydrolysis of small-molecule substrates. Assays are conveniently made with hemoglobin, casein or Z-Phe-Arg-NHMec as substrate.. With respect to regulation, prematurely activated/folded staphopain A is inhibited by staphostatin A (ScpB), which is probably required to protect staphylococcal cytoplasmic proteins from degradation by ScpA. Functionally, cysteine protease that plays an important role in the inhibition of host innate immune response. Cleaves host elastins found in connective tissues, pulmonary surfactant protein A in the lungs, and the chemokine receptor CXCR2 on leukocytes. Proteolytic cleavage of surfactant protein A impairs bacterial phagocytosis by neutrophils while CXCR2 degradation blocks neutrophil activation and chemotaxis. Additionally, promotes vascular leakage by activating the plasma kallikerin/kinin system, resulting in hypotension. In Staphylococcus aureus (strain Mu50 / ATCC 700699), this protein is Staphopain A (sspP).